The primary structure comprises 214 residues: Phosphatidylserine decarboxylase proenzyme (214 aa).

Residue serine 182 is the Schiff-base intermediate with substrate; via pyruvic acid of the active site. The residue at position 182 (serine 182) is a Pyruvic acid (Ser); by autocatalysis.

It belongs to the phosphatidylserine decarboxylase family. PSD-A subfamily. In terms of assembly, heterodimer of a large membrane-associated beta subunit and a small pyruvoyl-containing alpha subunit. Requires pyruvate as cofactor. Post-translationally, is synthesized initially as an inactive proenzyme. Formation of the active enzyme involves a self-maturation process in which the active site pyruvoyl group is generated from an internal serine residue via an autocatalytic post-translational modification. Two non-identical subunits are generated from the proenzyme in this reaction, and the pyruvate is formed at the N-terminus of the alpha chain, which is derived from the carboxyl end of the proenzyme. The post-translation cleavage follows an unusual pathway, termed non-hydrolytic serinolysis, in which the side chain hydroxyl group of the serine supplies its oxygen atom to form the C-terminus of the beta chain, while the remainder of the serine residue undergoes an oxidative deamination to produce ammonia and the pyruvoyl prosthetic group on the alpha chain.

The protein resides in the cell membrane. The enzyme catalyses a 1,2-diacyl-sn-glycero-3-phospho-L-serine + H(+) = a 1,2-diacyl-sn-glycero-3-phosphoethanolamine + CO2. Its pathway is phospholipid metabolism; phosphatidylethanolamine biosynthesis; phosphatidylethanolamine from CDP-diacylglycerol: step 2/2. Its function is as follows. Catalyzes the formation of phosphatidylethanolamine (PtdEtn) from phosphatidylserine (PtdSer). The protein is Phosphatidylserine decarboxylase proenzyme of Solidesulfovibrio magneticus (strain ATCC 700980 / DSM 13731 / RS-1) (Desulfovibrio magneticus).